The sequence spans 554 residues: Phenylalanine--tRNA ligase beta subunit (554 aa).

The region spanning leucine 276–glycine 351 is the B5 domain. Residues aspartate 329, aspartate 335, glutamate 338, and glutamate 339 each contribute to the Mg(2+) site.

The protein belongs to the phenylalanyl-tRNA synthetase beta subunit family. Type 2 subfamily. As to quaternary structure, tetramer of two alpha and two beta subunits. Mg(2+) serves as cofactor.

The protein resides in the cytoplasm. The catalysed reaction is tRNA(Phe) + L-phenylalanine + ATP = L-phenylalanyl-tRNA(Phe) + AMP + diphosphate + H(+). The protein is Phenylalanine--tRNA ligase beta subunit of Methanococcus maripaludis (strain C7 / ATCC BAA-1331).